The sequence spans 311 residues: Porphobilinogen deaminase (311 aa).

At Cys-245 the chain carries S-(dipyrrolylmethanemethyl)cysteine.

It belongs to the HMBS family. In terms of assembly, monomer. Dipyrromethane is required as a cofactor.

The catalysed reaction is 4 porphobilinogen + H2O = hydroxymethylbilane + 4 NH4(+). It participates in porphyrin-containing compound metabolism; protoporphyrin-IX biosynthesis; coproporphyrinogen-III from 5-aminolevulinate: step 2/4. Tetrapolymerization of the monopyrrole PBG into the hydroxymethylbilane pre-uroporphyrinogen in several discrete steps. The sequence is that of Porphobilinogen deaminase from Acinetobacter baylyi (strain ATCC 33305 / BD413 / ADP1).